Consider the following 435-residue polypeptide: ATP-dependent protease ATPase subunit HslU (435 aa).

Residues isoleucine 18, 60–65, aspartate 248, glutamate 313, and arginine 385 each bind ATP; that span reads GVGKTE.

Belongs to the ClpX chaperone family. HslU subfamily. In terms of assembly, a double ring-shaped homohexamer of HslV is capped on each side by a ring-shaped HslU homohexamer. The assembly of the HslU/HslV complex is dependent on binding of ATP.

It is found in the cytoplasm. Functionally, ATPase subunit of a proteasome-like degradation complex; this subunit has chaperone activity. The binding of ATP and its subsequent hydrolysis by HslU are essential for unfolding of protein substrates subsequently hydrolyzed by HslV. HslU recognizes the N-terminal part of its protein substrates and unfolds these before they are guided to HslV for hydrolysis. The protein is ATP-dependent protease ATPase subunit HslU of Rhizobium etli (strain CIAT 652).